Reading from the N-terminus, the 489-residue chain is Glycogen synthase (489 aa).

Position 20 (R20) interacts with ADP-alpha-D-glucose.

It belongs to the glycosyltransferase 1 family. Bacterial/plant glycogen synthase subfamily.

It carries out the reaction [(1-&gt;4)-alpha-D-glucosyl](n) + ADP-alpha-D-glucose = [(1-&gt;4)-alpha-D-glucosyl](n+1) + ADP + H(+). Its pathway is glycan biosynthesis; glycogen biosynthesis. Synthesizes alpha-1,4-glucan chains using ADP-glucose. The protein is Glycogen synthase of Chlorobium limicola (strain DSM 245 / NBRC 103803 / 6330).